A 277-amino-acid polypeptide reads, in one-letter code: MHPDSQLETAVKSGFDPKSLYSTELTKVNEPARTILEKYSKIPADNILQHVKDLRDRAFAFPYACIGQASFLELSIASSPCYPEMLDRVKKGDRLLDLGCAFGQELRQLIYDGAPSQNLYGSDLRPEFLELGLDLFMDRPTIKSRFIDADVLDDKSALVTQLTGELNIVYISLFLHVFDFDTQIKVAKRALELLAPKAGSLIVCRVVACRDQAIGNATNARLPYYYHDLASWNRLWERVQEETGLKLKVDNWEQDDALAKKHPLEGIYMLGSSIRRE.

Residues 123 to 124, 150 to 151, and 151 to 152 each bind S-adenosyl-L-methionine; these read DL, DV, and VL.

It belongs to the class I-like SAM-binding methyltransferase superfamily. As to quaternary structure, homodimer.

It participates in secondary metabolite biosynthesis; terpenoid biosynthesis. Functionally, methyltransferase; part of the gene cluster that mediates the biosynthesis of andrastins, meroterpenoid compounds that exhibit inhibitory activity against ras farnesyltransferase, suggesting that they could be promising leads for antitumor agents. The first step of the pathway is the synthesis of 3,5-dimethylorsellinic acid (DMOA) by the polyketide synthase adrD via condensation of one acetyl-CoA starter unit with 3 malonyl-CoA units and 2 methylations. DMAO is then converted to farnesyl-DMAO by the prenyltransferase adrG. The methyltransferase adrK catalyzes the methylation of the carboxyl group of farnesyl-DMAO to farnesyl-DMAO methyl ester which is further converted to epoxyfarnesyl-DMAO methyl ester by the FAD-dependent monooxygenase adrH. The terpene cyclase adrI then catalyzes the carbon skeletal rearrangement to generate the andrastin E, the first compound in the pathway having the andrastin scaffold, with the tetracyclic ring system. The post-cyclization tailoring enzymes adrF, adrE, adrJ, and adrA, are involved in the conversion of andrastin E into andrastin A. The short chain dehydrogenase adrF is responsible for the oxidation of the C-3 a hydroxyl group of andrastin E to yield the corresponding ketone, andrastin D. The ketoreductase adrE stereoselectively reduces the carbonyl moiety to reverse the stereochemistry of the C-3 position to yield andrastin F. The acetyltransferase adrJ is the acetyltransferase that attaches the acetyl group to the C-3 hydroxyl group of andrastin F to yield andrastin C. Finally, the cytochrome P450 monooxygenase adrA catalyzes two sequential oxidation reactions of the C-23 methyl group, to generate the corresponding alcohol andrastin B, and aldehyde andrastin A. This Penicillium rubens (strain ATCC 28089 / DSM 1075 / NRRL 1951 / Wisconsin 54-1255) (Penicillium chrysogenum) protein is Methyltransferase adrK.